A 211-amino-acid polypeptide reads, in one-letter code: Octanoyltransferase (211 aa).

The BPL/LPL catalytic domain occupies 32–211 (DHEPEIIYLV…IQTEFNKIFK (180 aa)). Substrate contacts are provided by residues 71-78 (RGGKFTFH), 145-147 (AIG), and 158-160 (GVA). The active-site Acyl-thioester intermediate is C176.

Belongs to the LipB family.

The protein resides in the cytoplasm. It catalyses the reaction octanoyl-[ACP] + L-lysyl-[protein] = N(6)-octanoyl-L-lysyl-[protein] + holo-[ACP] + H(+). It functions in the pathway protein modification; protein lipoylation via endogenous pathway; protein N(6)-(lipoyl)lysine from octanoyl-[acyl-carrier-protein]: step 1/2. Its function is as follows. Catalyzes the transfer of endogenously produced octanoic acid from octanoyl-acyl-carrier-protein onto the lipoyl domains of lipoate-dependent enzymes. Lipoyl-ACP can also act as a substrate although octanoyl-ACP is likely to be the physiological substrate. The polypeptide is Octanoyltransferase (Rickettsia massiliae (strain Mtu5)).